Consider the following 227-residue polypeptide: MAYPFQLGLQDATSPIMEELTNFHDHTLMIVFLISSLVLYIISLMLTTKLTHTNTMDAQEVETIWTILPAVILILIALPSLRILYMMDEINNPALTVKTMGHQWYWSYEYTDYEDLCFDSYMIPTNDLKPGELRLLEVDNRVVLPMELPIRMLVSSEDVLHSWAVPSLGLKTDAIPGRLNQATVTSNRPGLFYGQCSEICGSNHSFMPIVLEMVPLKHFENWSASMI.

The Mitochondrial intermembrane segment spans residues 1–14; it reads MAYPFQLGLQDATS. Residues 15-45 form a helical membrane-spanning segment; the sequence is PIMEELTNFHDHTLMIVFLISSLVLYIISLM. The Mitochondrial matrix segment spans residues 46–59; the sequence is LTTKLTHTNTMDAQ. A helical membrane pass occupies residues 60–87; sequence EVETIWTILPAVILILIALPSLRILYMM. Topologically, residues 88–227 are mitochondrial intermembrane; the sequence is DEINNPALTV…HFENWSASMI (140 aa). Cu cation contacts are provided by H161, C196, E198, C200, H204, and M207. Residue E198 coordinates Mg(2+).

The protein belongs to the cytochrome c oxidase subunit 2 family. In terms of assembly, component of the cytochrome c oxidase (complex IV, CIV), a multisubunit enzyme composed of 14 subunits. The complex is composed of a catalytic core of 3 subunits MT-CO1, MT-CO2 and MT-CO3, encoded in the mitochondrial DNA, and 11 supernumerary subunits COX4I, COX5A, COX5B, COX6A, COX6B, COX6C, COX7A, COX7B, COX7C, COX8 and NDUFA4, which are encoded in the nuclear genome. The complex exists as a monomer or a dimer and forms supercomplexes (SCs) in the inner mitochondrial membrane with NADH-ubiquinone oxidoreductase (complex I, CI) and ubiquinol-cytochrome c oxidoreductase (cytochrome b-c1 complex, complex III, CIII), resulting in different assemblies (supercomplex SCI(1)III(2)IV(1) and megacomplex MCI(2)III(2)IV(2)). Found in a complex with TMEM177, COA6, COX18, COX20, SCO1 and SCO2. Interacts with TMEM177 in a COX20-dependent manner. Interacts with COX20. Interacts with COX16. Cu cation is required as a cofactor.

Its subcellular location is the mitochondrion inner membrane. The enzyme catalyses 4 Fe(II)-[cytochrome c] + O2 + 8 H(+)(in) = 4 Fe(III)-[cytochrome c] + 2 H2O + 4 H(+)(out). In terms of biological role, component of the cytochrome c oxidase, the last enzyme in the mitochondrial electron transport chain which drives oxidative phosphorylation. The respiratory chain contains 3 multisubunit complexes succinate dehydrogenase (complex II, CII), ubiquinol-cytochrome c oxidoreductase (cytochrome b-c1 complex, complex III, CIII) and cytochrome c oxidase (complex IV, CIV), that cooperate to transfer electrons derived from NADH and succinate to molecular oxygen, creating an electrochemical gradient over the inner membrane that drives transmembrane transport and the ATP synthase. Cytochrome c oxidase is the component of the respiratory chain that catalyzes the reduction of oxygen to water. Electrons originating from reduced cytochrome c in the intermembrane space (IMS) are transferred via the dinuclear copper A center (CU(A)) of subunit 2 and heme A of subunit 1 to the active site in subunit 1, a binuclear center (BNC) formed by heme A3 and copper B (CU(B)). The BNC reduces molecular oxygen to 2 water molecules using 4 electrons from cytochrome c in the IMS and 4 protons from the mitochondrial matrix. In Sundamys muelleri (Mueller's giant sunda rat), this protein is Cytochrome c oxidase subunit 2 (MT-CO2).